We begin with the raw amino-acid sequence, 220 residues long: Guanylate kinase (220 aa).

The region spanning 15–194 is the Guanylate kinase-like domain; it reads GLMLVISSPS…ALDAVQSIVK (180 aa). 22-29 contributes to the ATP binding site; the sequence is SPSGAGKS.

The protein belongs to the guanylate kinase family.

The protein localises to the cytoplasm. It catalyses the reaction GMP + ATP = GDP + ADP. Functionally, essential for recycling GMP and indirectly, cGMP. This chain is Guanylate kinase, found in Rhizobium johnstonii (strain DSM 114642 / LMG 32736 / 3841) (Rhizobium leguminosarum bv. viciae).